The following is a 457-amino-acid chain: Cyanidin 3-O-galactoside 2''-O-xylosyltransferase FGGT1 (457 aa).

This sequence belongs to the UDP-glycosyltransferase family. In terms of tissue distribution, expressed in ovaries.

The catalysed reaction is cyanidin 3-O-beta-D-galactoside + UDP-alpha-D-xylose = cyanidin 3-O-[beta-D-xylosyl-(1-&gt;2)-beta-D-galactoside] + UDP + H(+). It functions in the pathway pigment biosynthesis; anthocyanin biosynthesis. Its function is as follows. Xylosyltransferase involved in anthocyanin biosynthesis by catalyzing the xylosylation of cyanidin 3-O-galactoside to form cyanidin 3-O-[2-O-(-xylosyl)-galactoside]. Required for the accumulation of anthocyanin in red-fleshed kiwifruit varieties. In Actinidia chinensis var. chinensis (Chinese soft-hair kiwi), this protein is Cyanidin 3-O-galactoside 2''-O-xylosyltransferase FGGT1.